The chain runs to 334 residues: GTP 3',8-cyclase (334 aa).

In terms of domain architecture, Radical SAM core spans 13–239; that stretch reads RFQRKFYYLR…KARADNDGPA (227 aa). GTP is bound at residue Arg-22. [4Fe-4S] cluster is bound by residues Cys-29 and Cys-33. Tyr-35 lines the S-adenosyl-L-methionine pocket. Cys-36 serves as a coordination point for [4Fe-4S] cluster. Arg-73 lines the GTP pocket. S-adenosyl-L-methionine is bound at residue Gly-77. Residue Thr-104 coordinates GTP. S-adenosyl-L-methionine is bound at residue Ser-128. GTP is bound at residue Lys-165. Met-199 contributes to the S-adenosyl-L-methionine binding site. 2 residues coordinate [4Fe-4S] cluster: Cys-262 and Cys-265. Position 267–269 (267–269) interacts with GTP; the sequence is RLR. Cys-279 contributes to the [4Fe-4S] cluster binding site.

This sequence belongs to the radical SAM superfamily. MoaA family. In terms of assembly, monomer and homodimer. Requires [4Fe-4S] cluster as cofactor.

It catalyses the reaction GTP + AH2 + S-adenosyl-L-methionine = (8S)-3',8-cyclo-7,8-dihydroguanosine 5'-triphosphate + 5'-deoxyadenosine + L-methionine + A + H(+). Its pathway is cofactor biosynthesis; molybdopterin biosynthesis. In terms of biological role, catalyzes the cyclization of GTP to (8S)-3',8-cyclo-7,8-dihydroguanosine 5'-triphosphate. This Vibrio cholerae serotype O1 (strain M66-2) protein is GTP 3',8-cyclase.